We begin with the raw amino-acid sequence, 495 residues long: Neuronal acetylcholine receptor subunit beta-4 (495 aa).

The N-terminal stretch at M1 to C20 is a signal peptide. Residues R21–T235 lie on the Extracellular side of the membrane. Residues N35, N92, N137, and N165 are each glycosylated (N-linked (GlcNAc...) asparagine). C152 and C166 are joined by a disulfide. A helical transmembrane segment spans residues I236–P256. At S257–T264 the chain is on the cytoplasmic side. Residue E261 coordinates Na(+). Residues L265 to P285 traverse the membrane as a helical segment. Residues P286–Y297 are Extracellular-facing. Residues L298 to V318 form a helical membrane-spanning segment. Topologically, residues H319 to R463 are cytoplasmic. A helical membrane pass occupies residues L464 to P484. The Extracellular portion of the chain corresponds to L485–S495.

It belongs to the ligand-gated ion channel (TC 1.A.9) family. Acetylcholine receptor (TC 1.A.9.1) subfamily. Beta-4/CHRNB4 sub-subfamily. As to quaternary structure, neuronal AChR is composed of two different types of subunits: alpha and beta. CHRNB4/Beta-4 subunit can be combined to CHRNA2/alpha-2, CHRNA3/alpha-3 or CHRNA4/alpha-4, CHRNA5/alpha-5 and CHRNB3/beta-3 to give rise to functional receptors. Forms stoichiometries such as (CHRNA3)2:(CHRNB4)3 or (CHRNA3:CHRNB4)2:CHRNB3. Interacts with RIC3; which is required for proper folding and assembly. Interacts with LYPD6. In terms of tissue distribution, in the brain, it is detected in the medial habenula. In the peripheral nervous system, it is found at least in the adrenal gland.

It localises to the synaptic cell membrane. Its subcellular location is the cell membrane. It catalyses the reaction Ca(2+)(in) = Ca(2+)(out). The catalysed reaction is K(+)(in) = K(+)(out). It carries out the reaction Na(+)(in) = Na(+)(out). With respect to regulation, activated by a myriad of ligands such as acetylcholine, cytisine, nicotine, choline and epibatidine. nAChR activity is inhibited by the antagonist alpha-conotoxins BuIA and MII, small disulfide-constrained peptides from cone snails. The heteropentamer CHRNA3:CHRNB4 activity is blocked by the alpha-conotoxin ImI and AuIB. In terms of biological role, component of neuronal acetylcholine receptors (nAChRs) that function as pentameric, ligand-gated cation channels with high calcium permeability among other activities. nAChRs are excitatory neurotrasnmitter receptors formed by a collection of nAChR subunits known to mediate synaptic transmission in the nervous system and the neuromuscular junction. Each nAchR subunit confers differential attributes to channel properties, including activation, deactivation and desensitization kinetics, pH sensitivity, cation permeability, and binding to allosteric modulators. CHRNB4 forms heteropentameric neuronal acetylcholine receptors with CHRNA2, CHRNA3 and CHRNA4, as well as CHRNA5 and CHRNB3 as accesory subunits. CHRNA3:CHRNB4 being predominant in neurons of the autonomic ganglia, it is known as ganglionic nicotinic receptor. CHRNA3:CHRNB4 or CHRNA3:CHRNA5:CHRNB4 play also an important role in the habenulo-interpeduncular tract, modulating the mesolimbic dopamine system and affecting reward circuits and addiction. Hypothalamic CHRNA3:CHRNB4 nAChR activation by nicotine leads to activation of POMC neurons and a decrease in food intake. The sequence is that of Neuronal acetylcholine receptor subunit beta-4 (Chrnb4) from Rattus norvegicus (Rat).